Here is a 75-residue protein sequence, read N- to C-terminus: UPF0352 protein VSAL_I1058 (75 aa).

The protein belongs to the UPF0352 family.

The protein is UPF0352 protein VSAL_I1058 of Aliivibrio salmonicida (strain LFI1238) (Vibrio salmonicida (strain LFI1238)).